Consider the following 247-residue polypeptide: 1-(5-phosphoribosyl)-5-[(5-phosphoribosylamino)methylideneamino] imidazole-4-carboxamide isomerase 2 (247 aa).

The Proton acceptor role is filled by Glu8. Asp128 serves as the catalytic Proton donor.

It belongs to the HisA/HisF family.

It is found in the cytoplasm. The catalysed reaction is 1-(5-phospho-beta-D-ribosyl)-5-[(5-phospho-beta-D-ribosylamino)methylideneamino]imidazole-4-carboxamide = 5-[(5-phospho-1-deoxy-D-ribulos-1-ylimino)methylamino]-1-(5-phospho-beta-D-ribosyl)imidazole-4-carboxamide. Its pathway is amino-acid biosynthesis; L-histidine biosynthesis; L-histidine from 5-phospho-alpha-D-ribose 1-diphosphate: step 4/9. The polypeptide is 1-(5-phosphoribosyl)-5-[(5-phosphoribosylamino)methylideneamino] imidazole-4-carboxamide isomerase 2 (Ruegeria pomeroyi (strain ATCC 700808 / DSM 15171 / DSS-3) (Silicibacter pomeroyi)).